Consider the following 248-residue polypeptide: NH(3)-dependent NAD(+) synthetase (248 aa).

31–38 (GLSGGVDS) is an ATP binding site. Asp37 serves as a coordination point for Mg(2+). A deamido-NAD(+)-binding site is contributed by Arg114. Thr134 contacts ATP. Mg(2+) is bound at residue Glu139. 2 residues coordinate deamido-NAD(+): Lys147 and Asp154. The ATP site is built by Lys163 and Thr185. 232–233 (HK) provides a ligand contact to deamido-NAD(+).

Belongs to the NAD synthetase family. As to quaternary structure, homodimer.

The catalysed reaction is deamido-NAD(+) + NH4(+) + ATP = AMP + diphosphate + NAD(+) + H(+). It functions in the pathway cofactor biosynthesis; NAD(+) biosynthesis; NAD(+) from deamido-NAD(+) (ammonia route): step 1/1. Catalyzes the ATP-dependent amidation of deamido-NAD to form NAD. Uses ammonia as a nitrogen source. This chain is NH(3)-dependent NAD(+) synthetase, found in Mycoplasma pneumoniae (strain ATCC 29342 / M129 / Subtype 1) (Mycoplasmoides pneumoniae).